A 625-amino-acid polypeptide reads, in one-letter code: Chaperone protein HtpG (625 aa).

Residues 1 to 341 are a; substrate-binding; that stretch reads MEKKQFQAES…SEDLSLNISR (341 aa). Residues 342 to 551 are b; sequence EMLQHDRQLK…DGEITLEMEK (210 aa). Residues 552–625 are c; that stretch reads VLQAMPDNQN…FSQNMCKVMV (74 aa).

This sequence belongs to the heat shock protein 90 family. In terms of assembly, homodimer.

It localises to the cytoplasm. Functionally, molecular chaperone. Has ATPase activity. The sequence is that of Chaperone protein HtpG from Shouchella clausii (strain KSM-K16) (Alkalihalobacillus clausii).